The following is a 183-amino-acid chain: MADPSLYTYPSPLQGYENLAPLGTEVSPDGKSLLNPETGIKSKSYEKFTEPLDSGIRGAFDVHIYHFQKNKEQAKFARELWERIRREFPELRIYRFWEEPIGPHPVAMFEVNLFTPEQFGAFIPWLVINRGPLSALVHPNTVDEKGELLDEERDHTQRAIWMGEQLPLDLSLVKRLKQQKAAH.

To A.muscaria DOPA 4,5-dioxygenase.

This is an uncharacterized protein from Botryotinia fuckeliana (Noble rot fungus).